The sequence spans 145 residues: Large ribosomal subunit protein bL9 (145 aa).

The protein belongs to the bacterial ribosomal protein bL9 family.

Its function is as follows. Binds to the 23S rRNA. The sequence is that of Large ribosomal subunit protein bL9 from Ureaplasma parvum serovar 3 (strain ATCC 700970).